The chain runs to 262 residues: Abhydrolase domain-containing protein ACTT2 (262 aa).

Residues 260-262 (SKL) carry the Peroxisomal targeting signal type 1 motif.

It belongs to the AB hydrolase superfamily. AKT2 hydrolase family.

The protein localises to the peroxisome. The protein operates within mycotoxin biosynthesis. Abhydrolase domain-containing protein; part of the gene clusters that mediate the biosynthesis of the host-selective toxins (HSTs) ACT-toxins responsible for brown spot of tangerine disease by the tangerine pathotype which affects tangerines and mandarins. ACT-toxins consist of three moieties, 9,10-epoxy-8-hydroxy-9-methyl-decatrienoic acid (EDA), valine and a polyketide. ACT-toxin I is toxic to both citrus and pear; toxin II the 5''-deoxy derivative of ACT-toxin I, is highly toxic to pear and slightly toxic to citrus. On cellular level, ACT-toxins affect plasma membrane of susceptible cells and cause a sudden increase in loss of K(+) after a few minutes of toxin treatment. The acyl-CoA ligase ACTT1, the hydrolase ACTT2, the enoyl-CoA hydratases ACTT3 and ACTT6, and the acyl-CoA synthetase ACTT5 are all involved in the biosynthesis of the AK-, AF- and ACT-toxin common 9,10-epoxy-8-hydroxy-9-methyl-decatrienoic acid (EDA) structural moiety. The exact role of each enzyme, and of additional enzymes identified within the AF-toxin clusters have still to be determined. On the other hand, ACTTS1 to ACTTS4 are specific to the tangerine pathotype. The function of ACTTS3 is to elongate the polyketide chain portion of ACT-toxin that is unique to this toxin. The enoyl-reductase ACTTS2 might complement the missing enoyl-reductase (ER) domain in ACTTS3 in the synthesis of the polyketide portion of ACT-toxin. The roles of the nonribosomal peptide synthetases-related proteins ACTTS1 and ACTTS4 have also still not been elucidated. The chain is Abhydrolase domain-containing protein ACTT2 from Alternaria alternata (Alternaria rot fungus).